A 440-amino-acid chain; its full sequence is MSYSLYLAFLCLSLLTQRTCIQGNQVNVEVSRSDKLSLPGFENLTAGYNKFLRPNFGGDPVRIALTLDIASISSISESNMDYTATIYLRQRWTDPRLVFEGNKSFTLDARLVEFLWVPDTYIVESKKSFLHEVTVGNRLIRLFSNGTVLYALRITTTVTCNMDLSKYPMDTQTCKLQLESWGYDGNDVEFSWLRGNDSVRGLENLRLAQYTIQQYFTLVTVSQQETGNYTRLVLQFELRRNVLYFILETYVPSTFLVVLSWVSFWISLDSVPARTCIGVTTVLSMTTLMIGSRTSLPNTNCFIKAIDVYLGICFSFVFGALLEYAVAHYSSLQQMAVKDRGPAKDSEEVNITNIINSSISSFKRKISFASIEISGDNVNYSDLTMKASDKFKFVFREKISRIIDYFTIQNPSNVDRYSKLLFPLIFMLANVFYWAYYMYF.

The N-terminal stretch at 1–23 (MSYSLYLAFLCLSLLTQRTCIQG) is a signal peptide. Residues 24-241 (NQVNVEVSRS…LVLQFELRRN (218 aa)) are Extracellular-facing. Residues Asn43, Asn102, and Asn145 are each glycosylated (N-linked (GlcNAc...) asparagine). Cys160 and Cys174 are disulfide-bonded. N-linked (GlcNAc...) asparagine glycans are attached at residues Asn196 and Asn228. Residues 242–262 (VLYFILETYVPSTFLVVLSWV) traverse the membrane as a helical segment. The Cytoplasmic portion of the chain corresponds to 263 to 270 (SFWISLDS). The chain crosses the membrane as a helical span at residues 271 to 290 (VPARTCIGVTTVLSMTTLMI). Residues 291–301 (GSRTSLPNTNC) lie on the Extracellular side of the membrane. A helical membrane pass occupies residues 302 to 322 (FIKAIDVYLGICFSFVFGALL). At 323-419 (EYAVAHYSSL…NPSNVDRYSK (97 aa)) the chain is on the cytoplasmic side. Residues 420-440 (LLFPLIFMLANVFYWAYYMYF) form a helical membrane-spanning segment.

It belongs to the ligand-gated ion channel (TC 1.A.9) family. Gamma-aminobutyric acid receptor (TC 1.A.9.5) subfamily. GABRP sub-subfamily. As to quaternary structure, heteropentamer, formed by a combination of alpha (GABRA1-6), beta (GABRB1-3), gamma (GABRG1-3), delta (GABRD), epsilon (GABRE), rho (GABRR1-3), pi (GABRP) and theta (GABRQ) chains, each subunit exhibiting distinct physiological and pharmacological properties.

The protein resides in the cell membrane. It is found in the apical cell membrane. The enzyme catalyses chloride(in) = chloride(out). Pi subunit of the heteropentameric ligand-gated chloride channel gated by gamma-aminobutyric acid (GABA). GABA-gated chloride channels, also named GABA(A) receptors (GABAAR), consist of five subunits arranged around a central pore and contain GABA active binding site(s) located at the alpha and beta subunit interfaces. When activated by GABA, GABAARs selectively allow the flow of chloride anions across the cell membrane down their electrochemical gradient. Pi-containing GABAARs are mostly located in peripheral tissues. In the uterus, pi subunits modulate uterus contraction by altering the sensitivity of GABAARs to pregnanolone. In the lungs, pi-containing GABAARs contribute to pulmonary fluid transport via luminal secretion of chloride. The polypeptide is Gamma-aminobutyric acid receptor subunit pi (Mus musculus (Mouse)).